The following is a 722-amino-acid chain: Protein Aster-A (722 aa).

The tract at residues methionine 1–threonine 62 is disordered. The segment covering serine 8–serine 18 has biased composition (low complexity). In terms of domain architecture, GRAM spans glutamate 93 to lysine 160. Positions isoleucine 256 to leucine 336 are disordered. Phosphoserine occurs at positions 265, 269, 273, and 417. The VASt domain maps to serine 369–leucine 540. A disordered region spans residues leucine 561 to glutamine 600. Residues glycine 565–proline 575 show a composition bias toward basic and acidic residues. The segment covering cysteine 578–serine 594 has biased composition (polar residues). A helical membrane pass occupies residues alanine 609–tyrosine 629.

As to expression, highly expressed in the brain.

It localises to the endoplasmic reticulum membrane. The protein resides in the cell membrane. It is found in the cytoplasmic vesicle. The protein localises to the autophagosome. In terms of biological role, cholesterol transporter that mediates non-vesicular transport of cholesterol from the plasma membrane (PM) to the endoplasmic reticulum (ER). Contains unique domains for binding cholesterol and the PM, thereby serving as a molecular bridge for the transfer of cholesterol from the PM to the ER. Plays a crucial role in cholesterol homeostasis and has the unique ability to localize to the PM based on the level of membrane cholesterol. In lipid-poor conditions localizes to the ER membrane and in response to excess cholesterol in the PM is recruited to the endoplasmic reticulum-plasma membrane contact sites (EPCS) which is mediated by the GRAM domain. At the EPCS, the sterol-binding VASt/ASTER domain binds to the cholesterol in the PM and facilitates its transfer from the PM to ER. May play a role in tumor progression. Plays a role in autophagy regulation and is required for biogenesis of the autophagosome. This function in autophagy requires its cholesterol-transfer activity. The chain is Protein Aster-A from Mus musculus (Mouse).